A 257-amino-acid polypeptide reads, in one-letter code: Uracil phosphoribosyltransferase homolog (257 aa).

GTP-binding positions include Arg81, Arg90, and 124–127 (EKGN). Residue Arg134 coordinates 5-phospho-alpha-D-ribose 1-diphosphate. The GTP site is built by Arg151 and Arg180. 186–194 (YPILSTGNT) serves as a coordination point for 5-phospho-alpha-D-ribose 1-diphosphate. 247–249 (THF) provides a ligand contact to uracil.

It belongs to the UPRTase family.

Its subcellular location is the cytoplasm. It localises to the nucleus. The chain is Uracil phosphoribosyltransferase homolog (uprt) from Danio rerio (Zebrafish).